A 66-amino-acid chain; its full sequence is Large ribosomal subunit protein uL29 (66 aa).

It belongs to the universal ribosomal protein uL29 family.

This is Large ribosomal subunit protein uL29 from Bacillus anthracis (strain CDC 684 / NRRL 3495).